Consider the following 156-residue polypeptide: ATP synthase subunit b (156 aa).

Residues 12–32 (VAFLIFVLFCMKFIWPPVIAA) traverse the membrane as a helical segment.

Belongs to the ATPase B chain family. F-type ATPases have 2 components, F(1) - the catalytic core - and F(0) - the membrane proton channel. F(1) has five subunits: alpha(3), beta(3), gamma(1), delta(1), epsilon(1). F(0) has three main subunits: a(1), b(2) and c(10-14). The alpha and beta chains form an alternating ring which encloses part of the gamma chain. F(1) is attached to F(0) by a central stalk formed by the gamma and epsilon chains, while a peripheral stalk is formed by the delta and b chains.

Its subcellular location is the cell inner membrane. Its function is as follows. F(1)F(0) ATP synthase produces ATP from ADP in the presence of a proton or sodium gradient. F-type ATPases consist of two structural domains, F(1) containing the extramembraneous catalytic core and F(0) containing the membrane proton channel, linked together by a central stalk and a peripheral stalk. During catalysis, ATP synthesis in the catalytic domain of F(1) is coupled via a rotary mechanism of the central stalk subunits to proton translocation. Functionally, component of the F(0) channel, it forms part of the peripheral stalk, linking F(1) to F(0). The sequence is that of ATP synthase subunit b from Pseudomonas fluorescens (strain ATCC BAA-477 / NRRL B-23932 / Pf-5).